A 320-amino-acid chain; its full sequence is Lipoyl synthase (320 aa).

The tract at residues 1 to 29 (MVTVVDRVTNRRLRHPEKAHRPDTSVQKK) is disordered. The segment covering 19-29 (AHRPDTSVQKK) has biased composition (basic and acidic residues). The [4Fe-4S] cluster site is built by C59, C64, C70, C85, C89, C92, and S298. The Radical SAM core domain maps to 71 to 287 (WSQRHASFMI…AKIGKVKGFL (217 aa)).

The protein belongs to the radical SAM superfamily. Lipoyl synthase family. [4Fe-4S] cluster is required as a cofactor.

It is found in the cytoplasm. The catalysed reaction is [[Fe-S] cluster scaffold protein carrying a second [4Fe-4S](2+) cluster] + N(6)-octanoyl-L-lysyl-[protein] + 2 oxidized [2Fe-2S]-[ferredoxin] + 2 S-adenosyl-L-methionine + 4 H(+) = [[Fe-S] cluster scaffold protein] + N(6)-[(R)-dihydrolipoyl]-L-lysyl-[protein] + 4 Fe(3+) + 2 hydrogen sulfide + 2 5'-deoxyadenosine + 2 L-methionine + 2 reduced [2Fe-2S]-[ferredoxin]. It functions in the pathway protein modification; protein lipoylation via endogenous pathway; protein N(6)-(lipoyl)lysine from octanoyl-[acyl-carrier-protein]: step 2/2. Catalyzes the radical-mediated insertion of two sulfur atoms into the C-6 and C-8 positions of the octanoyl moiety bound to the lipoyl domains of lipoate-dependent enzymes, thereby converting the octanoylated domains into lipoylated derivatives. The sequence is that of Lipoyl synthase from Bartonella tribocorum (strain CIP 105476 / IBS 506).